The sequence spans 202 residues: Ribonuclease HII (202 aa).

Residues 11-200 (GLIAGVDEVG…VRKAIEEFNR (190 aa)) enclose the RNase H type-2 domain. 3 residues coordinate a divalent metal cation: Asp-17, Glu-18, and Asp-109.

The protein belongs to the RNase HII family. Mn(2+) serves as cofactor. Requires Mg(2+) as cofactor.

Its subcellular location is the cytoplasm. It carries out the reaction Endonucleolytic cleavage to 5'-phosphomonoester.. Its function is as follows. Endonuclease that specifically degrades the RNA of RNA-DNA hybrids. The protein is Ribonuclease HII of Actinobacillus succinogenes (strain ATCC 55618 / DSM 22257 / CCUG 43843 / 130Z).